Reading from the N-terminus, the 256-residue chain is tRNA (guanine-N(7)-)-methyltransferase (256 aa).

Positions M1–D43 are disordered. Basic residues predominate over residues Q26–S36. Residues G74, E97–I98, N132–A133, and L152 contribute to the S-adenosyl-L-methionine site. The active site involves D155. An S-adenosyl-L-methionine-binding site is contributed by T230–E232.

This sequence belongs to the class I-like SAM-binding methyltransferase superfamily. TrmB family.

It localises to the nucleus. The enzyme catalyses guanosine(46) in tRNA + S-adenosyl-L-methionine = N(7)-methylguanosine(46) in tRNA + S-adenosyl-L-homocysteine. It participates in tRNA modification; N(7)-methylguanine-tRNA biosynthesis. In terms of biological role, catalyzes the formation of N(7)-methylguanine at position 46 (m7G46) in tRNA. This Caenorhabditis briggsae protein is tRNA (guanine-N(7)-)-methyltransferase.